Consider the following 125-residue polypeptide: Small ribosomal subunit protein bS6 (125 aa).

Positions Glu96–Arg125 are disordered. The span at Thr105 to Ser115 shows a compositional bias: basic and acidic residues.

This sequence belongs to the bacterial ribosomal protein bS6 family.

Functionally, binds together with bS18 to 16S ribosomal RNA. This Paracidovorax citrulli (strain AAC00-1) (Acidovorax citrulli) protein is Small ribosomal subunit protein bS6.